Consider the following 679-residue polypeptide: Transketolase 10 (679 aa).

Residue His-40 participates in substrate binding. Residues His-80 and 129–131 (GPL) each bind thiamine diphosphate. Residue Asp-170 coordinates Mg(2+). Residues Gly-171 and Asn-200 each contribute to the thiamine diphosphate site. Mg(2+) is bound by residues Asn-200 and Ile-202. Residues His-277, Arg-371, and Ser-398 each coordinate substrate. Position 277 (His-277) interacts with thiamine diphosphate. Thiamine diphosphate-binding residues include Glu-425 and Phe-452. The active-site Proton donor is the Glu-425. Substrate is bound by residues His-476, Asp-484, and Arg-535.

It belongs to the transketolase family. In terms of assembly, homodimer. Requires Mg(2+) as cofactor. Ca(2+) serves as cofactor. The cofactor is Mn(2+). Co(2+) is required as a cofactor. It depends on thiamine diphosphate as a cofactor. Leaves.

It catalyses the reaction D-sedoheptulose 7-phosphate + D-glyceraldehyde 3-phosphate = aldehydo-D-ribose 5-phosphate + D-xylulose 5-phosphate. Could be involved in the conversion of sugars, which are a major phenomenon in the rehydration process. In terms of biological role, catalyzes the transfer of a two-carbon ketol group from a ketose donor to an aldose acceptor, via a covalent intermediate with the cofactor thiamine pyrophosphate. This Craterostigma plantagineum (Blue gem) protein is Transketolase 10 (TKT10).